The primary structure comprises 195 residues: 2-hydroxychromene-2-carboxylate isomerase (195 aa).

The Nucleophile role is filled by serine 13. Residue serine 13 participates in glutathione binding. Residues lysine 45 and 55-56 contribute to the substrate site; that span reads NR. 181–184 lines the glutathione pocket; sequence WGND.

This sequence belongs to the GST superfamily. NadH family. Requires glutathione as cofactor.

It carries out the reaction 2-hydroxychromene-2-carboxylate = (3E)-4-(2-hydroxyphenyl)-2-oxobut-3-enoate. Activated by salicylate. Its function is as follows. Involved in the naphthalene and naphthalenesulfonate catabolic pathway. Catalyzes the reversible glutathione-dependent isomerization of 2-hydroxychromene-2-carboxylate (HCCA) to trans-O-hydroxybenzylidenepyruvate (THBPA). It can also use 2-hydroxybenzo[g]chromene-2-carboxylate as substrate. In Sphingobium xenophagum, this protein is 2-hydroxychromene-2-carboxylate isomerase (nsaD).